A 566-amino-acid polypeptide reads, in one-letter code: Proline--tRNA ligase (566 aa).

The protein belongs to the class-II aminoacyl-tRNA synthetase family. ProS type 1 subfamily. In terms of assembly, homodimer.

It is found in the cytoplasm. It catalyses the reaction tRNA(Pro) + L-proline + ATP = L-prolyl-tRNA(Pro) + AMP + diphosphate. In terms of biological role, catalyzes the attachment of proline to tRNA(Pro) in a two-step reaction: proline is first activated by ATP to form Pro-AMP and then transferred to the acceptor end of tRNA(Pro). As ProRS can inadvertently accommodate and process non-cognate amino acids such as alanine and cysteine, to avoid such errors it has two additional distinct editing activities against alanine. One activity is designated as 'pretransfer' editing and involves the tRNA(Pro)-independent hydrolysis of activated Ala-AMP. The other activity is designated 'posttransfer' editing and involves deacylation of mischarged Ala-tRNA(Pro). The misacylated Cys-tRNA(Pro) is not edited by ProRS. The chain is Proline--tRNA ligase from Bacillus anthracis (strain A0248).